The sequence spans 404 residues: Multidrug resistance protein MdtG (404 aa).

Transmembrane regions (helical) follow at residues 19–39, 56–76, 90–110, 113–133, 144–164, 171–191, 222–242, 254–274, 288–308, 317–337, and 376–396; these read LGCF…PLYV, LVFS…GGLA, LGMA…QFLI, ALLG…ATQV, TLST…GLLA, PVFF…FFFI, LFVT…ILTL, IAFI…LSAP, ILIV…FVQT, FLLG…LVYN, and AVFC…WNSL.

This sequence belongs to the major facilitator superfamily. DHA1 family. MdtG (TC 2.A.1.2.20) subfamily.

The protein resides in the cell inner membrane. The chain is Multidrug resistance protein MdtG from Salmonella heidelberg (strain SL476).